Consider the following 296-residue polypeptide: Ribosomal RNA small subunit methyltransferase A (296 aa).

S-adenosyl-L-methionine is bound by residues N28, L30, G55, E77, D103, and N122.

It belongs to the class I-like SAM-binding methyltransferase superfamily. rRNA adenine N(6)-methyltransferase family. RsmA subfamily.

It is found in the cytoplasm. The catalysed reaction is adenosine(1518)/adenosine(1519) in 16S rRNA + 4 S-adenosyl-L-methionine = N(6)-dimethyladenosine(1518)/N(6)-dimethyladenosine(1519) in 16S rRNA + 4 S-adenosyl-L-homocysteine + 4 H(+). Specifically dimethylates two adjacent adenosines (A1518 and A1519) in the loop of a conserved hairpin near the 3'-end of 16S rRNA in the 30S particle. May play a critical role in biogenesis of 30S subunits. The protein is Ribosomal RNA small subunit methyltransferase A of Sinorhizobium fredii (strain NBRC 101917 / NGR234).